Reading from the N-terminus, the 439-residue chain is Forkhead box protein J1-A (439 aa).

A DNA-binding region (fork-head) is located at residues 124–218 (KPPYSYATLI…INGAMKKRRL (95 aa)). The interval 273–293 (EHGWNSISDGKSHKRKQPLPK) is disordered. Positions 284-293 (SHKRKQPLPK) are enriched in basic residues.

It belongs to the FOXJ1 family. As to expression, expressed in two independent areas of stage 10-11 embryos; in the dorsal blastopore lip (Spemann organizer) and shortly after in the ectodermal cells of the animal cap. As development proceeds, cells of the animal cap contribute to the epidermis and show a spotty pattern, which suggests expression in ciliated epidermal cells. Distribution of these cells is uniform in the trunk area of the embryo but more random in the head, being practically absent in the cement gland and olfactory placode. The spotted pattern becomes more dispersed as embryos grow in size. Due to cell movements during gastrulation, expression in the dorsal lip becomes located in the dorsal midline with expression restricted to the neuroectoderm. Expressed transiently in cells of the newly formed neural floor plate in the tail of older tadpoles.

The protein localises to the nucleus. Its function is as follows. Key transcription factor required for motile ciliogenesis. Activates genes essential for motile cilia formation and function. Required for ciliogenesis in multiciliated cells. The polypeptide is Forkhead box protein J1-A (foxj1-a) (Xenopus laevis (African clawed frog)).